The following is a 692-amino-acid chain: E3 ubiquitin-protein ligase MARCHF7 (692 aa).

At Met1 the chain carries N-acetylmethionine. Disordered stretches follow at residues 1-165 (MESK…SHRS), 201-280 (STNH…GRRT), 296-343 (FFSR…RASE), 360-425 (LSQN…HLFR), 440-474 (SLGAAASRPQASGASGNASASGSTPDLPQGGRNTG), and 512-532 (SSADGKSEKAKSAPSRDPEKL). A compositionally biased stretch (basic and acidic residues) spans 37–48 (YHSRDSSFRLDS). Composition is skewed to polar residues over residues 61-83 (PYQSTWYSESEITQGARSRSQNQ) and 95-132 (SCTNCTSTSAGRNIGSGLNTLSDSSWRPGQVPRSSSMV). Residues 140 to 153 (LMRERRDLERRRDS) show a composition bias toward basic and acidic residues. Residues 201-214 (STNHQLPSEHQTVP) are compositionally biased toward polar residues. Residues 215–233 (SSRDSSRSSFRSHFSPRQS) are compositionally biased toward low complexity. Residues 235–272 (SFRNSSHPAFSYLSSRNETPTISSSERAGSSQRPFQES) are compositionally biased toward polar residues. A compositionally biased stretch (low complexity) spans 296–305 (FFSRRSSQDS). The span at 306–336 (LNTRSLSSENYISPRTLTSQSRNNGASSSEV) shows a compositional bias: polar residues. Ser318 and Ser389 each carry phosphoserine. Residues 450-462 (ASGASGNASASGS) show a composition bias toward low complexity. Over residues 516-532 (GKSEKAKSAPSRDPEKL) the composition is skewed to basic and acidic residues. The RING-CH-type zinc finger occupies 545 to 615 (DEEEEGDLCR…ELCKEKLQLN (71 aa)). Residues Cys553, Cys556, Cys571, Cys573, His581, Cys584, Cys605, and Cys608 each coordinate Zn(2+). A Phosphothreonine modification is found at Thr687. Residue Ser688 is modified to Phosphoserine.

Its subcellular location is the cytoplasm. The catalysed reaction is S-ubiquitinyl-[E2 ubiquitin-conjugating enzyme]-L-cysteine + [acceptor protein]-L-lysine = [E2 ubiquitin-conjugating enzyme]-L-cysteine + N(6)-ubiquitinyl-[acceptor protein]-L-lysine.. It participates in protein modification; protein ubiquitination. Functionally, E3 ubiquitin-protein ligase which may specifically enhance the E2 activity of HIP2. E3 ubiquitin ligases accept ubiquitin from an E2 ubiquitin-conjugating enzyme in the form of a thioester and then directly transfer the ubiquitin to targeted substrates. May be involved in T-cell proliferation by regulating LIF secretion. May play a role in lysosome homeostasis. Promotes 'Lys-6', 'Lys-11' and 'Lys-63'-linked mixed polyubiquitination on ATG14 leading to the inhibition of autophagy by impairing the interaction between ATG14 and STX7. Participates in the dopamine-mediated negative regulation of the NLRP3 inflammasome by promoting its uibiquitination and subsequent degradation. In Rattus norvegicus (Rat), this protein is E3 ubiquitin-protein ligase MARCHF7 (Marchf7).